The sequence spans 132 residues: uncharacterized protein (132 aa).

This is an uncharacterized protein from Mycoplasma genitalium (strain ATCC 33530 / DSM 19775 / NCTC 10195 / G37) (Mycoplasmoides genitalium).